A 246-amino-acid polypeptide reads, in one-letter code: Protein 3F (246 aa).

Residues 1–19 form the signal peptide; it reads MKLLSKLILTLALATYASA. Asn52 carries an N-linked (GlcNAc...) asparagine glycan. A compositionally biased stretch (basic and acidic residues) spans 113-124; the sequence is EVRPIDRLKDNA. The tract at residues 113 to 223 is disordered; the sequence is EVRPIDRLKD…EEAEHVEKGA (111 aa). A compositionally biased stretch (polar residues) spans 126–145; the sequence is AANTENAQKSPNTQSTQKGS. Repeat copies occupy residues 145–153, 154–162, and 163–171. The segment at 145 to 176 is 3.5 X 9 AA tandem repeats of S-P-K-[ST]-D-A-K-E-A; it reads SPKSDAKEASPKTDAKEASPKSDAKEASPKTD. The span at 146-177 shows a compositional bias: basic and acidic residues; it reads PKSDAKEASPKTDAKEASPKSDAKEASPKTDT. A 4; truncated repeat occupies 172–176; that stretch reads SPKTD. The segment covering 181–213 has biased composition (low complexity); the sequence is SSPKTDTKSSTQKPSSSSDSSKAKAEANTAANN.

This Dictyostelium discoideum (Social amoeba) protein is Protein 3F (pspG).